Consider the following 268-residue polypeptide: Forkhead box protein R1 (268 aa).

The disordered stretch occupies residues 91-126 (EDSCSEASEVQQPLPPCRQKRKQRRSTVPLPLAPGR). Residues 149–248 (RPPLHYFHLI…KEARTLASTQ (100 aa)) constitute a DNA-binding region (fork-head).

Expressed in adult germ cells (at protein level). Expressed in heart, liver, lung and embryonic brain.

It is found in the nucleus. Its subcellular location is the cytoplasm. It localises to the perinuclear region. Its function is as follows. Transcription factor which acts as both an activator and a repressor. Activates transcription of a number of genes including the heat shock chaperones HSPA1A and HSPA6 and the antioxidant NADPH-dependent reductase DHRS2 which are involved in protection against oxidative stress. Required for normal brain development. This chain is Forkhead box protein R1 (Foxr1), found in Mus musculus (Mouse).